A 335-amino-acid chain; its full sequence is Glyceraldehyde-3-phosphate dehydrogenase (335 aa).

Residues 12–13 (RI), aspartate 34, arginine 78, and serine 120 each bind NAD(+). Residues 151-153 (SCT) and threonine 182 each bind D-glyceraldehyde 3-phosphate. Cysteine 152 (nucleophile) is an active-site residue. Position 183 (asparagine 183) interacts with NAD(+). Residues arginine 197, 210 to 211 (TG), and arginine 233 each bind D-glyceraldehyde 3-phosphate. Residue asparagine 315 coordinates NAD(+).

Belongs to the glyceraldehyde-3-phosphate dehydrogenase family. In terms of assembly, homotetramer.

The protein resides in the cytoplasm. It carries out the reaction D-glyceraldehyde 3-phosphate + phosphate + NAD(+) = (2R)-3-phospho-glyceroyl phosphate + NADH + H(+). The protein operates within carbohydrate degradation; glycolysis; pyruvate from D-glyceraldehyde 3-phosphate: step 1/5. Functionally, catalyzes the oxidative phosphorylation of glyceraldehyde 3-phosphate (G3P) to 1,3-bisphosphoglycerate (BPG) using the cofactor NAD. The first reaction step involves the formation of a hemiacetal intermediate between G3P and a cysteine residue, and this hemiacetal intermediate is then oxidized to a thioester, with concomitant reduction of NAD to NADH. The reduced NADH is then exchanged with the second NAD, and the thioester is attacked by a nucleophilic inorganic phosphate to produce BPG. The sequence is that of Glyceraldehyde-3-phosphate dehydrogenase (gap) from Geobacillus stearothermophilus (Bacillus stearothermophilus).